The sequence spans 199 residues: MENKGNMELSNSYGFYKNGRRVSFVKATSEQSLDEATFIEKGSAQAFYHSLFENDRDNSHTMNSKRDEAGFACEVCQIYIPNSKKINHFKSMTHLLSSQHISNKFQPHLLKPKSLGYRVLSQYGWSPQGDTAGLGLENQGRRAPVRAFRVKNDTIGLGTKIDLEKVAVNKCRKGKRQCQIQHSKDVRLKEALIKHFSSN.

In terms of domain architecture, G-patch spans 112-160 (PKSLGYRVLSQYGWSPQGDTAGLGLENQGRRAPVRAFRVKNDTIGLGTK).

This is an uncharacterized protein from Schizosaccharomyces pombe (strain 972 / ATCC 24843) (Fission yeast).